Here is a 242-residue protein sequence, read N- to C-terminus: 1-(5-phosphoribosyl)-5-[(5-phosphoribosylamino)methylideneamino] imidazole-4-carboxamide isomerase (242 aa).

The Proton acceptor role is filled by aspartate 10. Aspartate 132 acts as the Proton donor in catalysis.

The protein belongs to the HisA/HisF family.

The protein resides in the cytoplasm. It catalyses the reaction 1-(5-phospho-beta-D-ribosyl)-5-[(5-phospho-beta-D-ribosylamino)methylideneamino]imidazole-4-carboxamide = 5-[(5-phospho-1-deoxy-D-ribulos-1-ylimino)methylamino]-1-(5-phospho-beta-D-ribosyl)imidazole-4-carboxamide. The protein operates within amino-acid biosynthesis; L-histidine biosynthesis; L-histidine from 5-phospho-alpha-D-ribose 1-diphosphate: step 4/9. The protein is 1-(5-phosphoribosyl)-5-[(5-phosphoribosylamino)methylideneamino] imidazole-4-carboxamide isomerase of Methanopyrus kandleri (strain AV19 / DSM 6324 / JCM 9639 / NBRC 100938).